Consider the following 605-residue polypeptide: Glutamine--fructose-6-phosphate aminotransferase [isomerizing] (605 aa).

Cysteine 2 (nucleophile; for GATase activity) is an active-site residue. A Glutamine amidotransferase type-2 domain is found at cysteine 2 to aspartate 219. SIS domains follow at residues isoleucine 285 to glutamate 424 and valine 457 to proline 595. Lysine 600 (for Fru-6P isomerization activity) is an active-site residue.

In terms of assembly, homodimer.

The protein localises to the cytoplasm. It carries out the reaction D-fructose 6-phosphate + L-glutamine = D-glucosamine 6-phosphate + L-glutamate. Catalyzes the first step in hexosamine metabolism, converting fructose-6P into glucosamine-6P using glutamine as a nitrogen source. The sequence is that of Glutamine--fructose-6-phosphate aminotransferase [isomerizing] from Lactococcus lactis subsp. lactis (strain IL1403) (Streptococcus lactis).